Here is a 36-residue protein sequence, read N- to C-terminus: Kappa-actitoxin-Avd6a (36 aa).

In terms of domain architecture, ShKT spans 2 to 36 (CKDNFAAATCKHVKENKNCGSQKYATNCAKTCGKC). 3 disulfides stabilise this stretch: Cys-2-Cys-36, Cys-11-Cys-29, and Cys-20-Cys-33. Positions 24-25 (KY) are crucial for binding to potassium channels.

The protein belongs to the sea anemone type 1 potassium channel toxin family. Type 1b subfamily.

The protein localises to the secreted. The protein resides in the nematocyst. In terms of biological role, blocks voltage-gated potassium channels Kv1.2/KCNA2 (IC(50)=140 nM). In Anemonia sulcata (Mediterranean snakelocks sea anemone), this protein is Kappa-actitoxin-Avd6a.